The sequence spans 473 residues: tRNA modification GTPase MnmE (473 aa).

Residues Arg-30, Glu-95, and Arg-134 each contribute to the (6S)-5-formyl-5,6,7,8-tetrahydrofolate site. Residues Gly-230–Glu-394 form the TrmE-type G domain. Residues Asn-240–Thr-245, Ser-259–Thr-265, and Asp-284–Gly-287 each bind GTP. 2 residues coordinate Mg(2+): Ser-244 and Thr-265. Lys-473 contacts (6S)-5-formyl-5,6,7,8-tetrahydrofolate.

This sequence belongs to the TRAFAC class TrmE-Era-EngA-EngB-Septin-like GTPase superfamily. TrmE GTPase family. Homodimer. Heterotetramer of two MnmE and two MnmG subunits. The cofactor is K(+).

The protein localises to the cytoplasm. Exhibits a very high intrinsic GTPase hydrolysis rate. Involved in the addition of a carboxymethylaminomethyl (cmnm) group at the wobble position (U34) of certain tRNAs, forming tRNA-cmnm(5)s(2)U34. In Chlorobium phaeovibrioides (strain DSM 265 / 1930) (Prosthecochloris vibrioformis (strain DSM 265)), this protein is tRNA modification GTPase MnmE.